The sequence spans 758 residues: Solute carrier family 26 member 6 (758 aa).

Residues 1 to 117 (MGLPDGSDQG…PQGLAYALLA (117 aa)) lie on the Cytoplasmic side of the membrane. A helical transmembrane segment spans residues 118–138 (GLPPMFGLYSSFYPVFIYFLF). Residues 139-187 (GTSRHISVGTFAVMSVMVGSVTESLTADKAFVQGLNATADDARVQVAYT) are Extracellular-facing. The N-linked (GlcNAc) asparagine glycan is linked to Asn174. A helical membrane pass occupies residues 188–208 (LSFLVGLFQVGLGLVHFGFVV). Residues 209 to 263 (TYLSEPLVRSYTTAASVQVLVSQLKYVFGIKLSSHSGPLSVIYTVLEVCAQLPET) are Cytoplasmic-facing. A helical membrane pass occupies residues 264–284 (VPGTVVTAIVAGVALVLVKLL). Residues 285-292 (NEKLHRRL) are Extracellular-facing. A helical transmembrane segment spans residues 293-313 (PLPIPGELLTLIGATGISYGV). Topologically, residues 314–340 (KLNDRFKVDVVGNITTGLIPPVAPKTE) are cytoplasmic. The chain crosses the membrane as a helical span at residues 341 to 361 (LFATLVGNAFAIAVVGFAIAI). The Extracellular portion of the chain corresponds to 362–380 (SLGKIFALRHGYRVDSNQE). A helical membrane pass occupies residues 381-401 (LVALGLSNLIGGFFQCFPVSC). Topologically, residues 402-417 (SMSRSLVQESTGGNTQ) are cytoplasmic. The chain crosses the membrane as a helical span at residues 418–438 (VAGAVSSLFILLIIVKLGELF). Over 439 to 485 (RDLPKAVLAAVIIVNLKGMMKQFSDICSLWKANRVDLLIWLVTFVAT) the chain is Extracellular. Residues 486 to 506 (ILLNLDIGLAVSIVFSLLLVV) traverse the membrane as a helical segment. Residues 507 to 758 (VRMQLPHYSV…PKSPVLATKL (252 aa)) are Cytoplasmic-facing. The STAS domain maps to 531–741 (EYSGAKEVPG…ASVHDAVTFA (211 aa)). The tract at residues 585–608 (EMKLKRMKKAKKSQKQDASSKISS) is disordered. The residue at position 751 (Ser751) is a Phosphoserine.

As to quaternary structure, interacts (via C-terminal domain) with PDZK1 (via C-terminal PDZ domain); the interaction induces chloride and oxalate exchange transport. Interacts with CFTR, SLC26A3 and NHERF1. Interacts with AHCYL1; the interaction increases SLC26A6 activity. In terms of processing, N-glycosylated. Glycosylation at Asn-174 positively regulates its chloride oxalate exchanger activity. As to expression, expressed in kidney (at protein level). Expressed in spermatogenic cells. Expressed in intestine, kidney, testis, brain, muscle, heart, and stomach. Expressed in the submandibular and sublingual salivary glands. Highly expressed in stomach, kidney, heart and small intestine, low in the lung, liver, testis, brain, skeletal muscle and colon. In terms of tissue distribution, expressed in the heart.

Its subcellular location is the cell membrane. It localises to the apical cell membrane. The protein resides in the cytoplasmic vesicle membrane. It is found in the microsome. It catalyses the reaction 2 hydrogencarbonate(in) + chloride(out) = 2 hydrogencarbonate(out) + chloride(in). The enzyme catalyses oxalate(in) + chloride(out) = oxalate(out) + chloride(in). It carries out the reaction oxalate(in) + formate(out) = oxalate(out) + formate(in). The catalysed reaction is oxalate(in) + sulfate(out) = oxalate(out) + sulfate(in). It catalyses the reaction formate(in) + chloride(out) = formate(out) + chloride(in). The enzyme catalyses sulfate(in) = sulfate(out). With respect to regulation, apical membrane chloride-bicarbonate exchange activity of the pancreatic duct is inhibited by 4,4'-diisothiocyanatostilbene-2,2'-disulfonic acid (DIDS). Oxalate secretion in the duodenum and chloride-formate exchange activity is inhibited by DIDS. Its activity is regulated as follows. Chloride-formate exchange activity and transcellular sulfate absorption is inhibited by 4,4'-diisothiocyanatostilbene-2,2'-disulfonic acid (DIDS). Apical membrane anion-exchanger with wide epithelial distribution that plays a role as a component of the pH buffering system for maintaining acid-base homeostasis. Acts as a versatile DIDS-sensitive inorganic and organic anion transporter that mediates the uptake of monovalent anions like chloride, bicarbonate, formate and hydroxyl ion and divalent anions like sulfate and oxalate. Functions in multiple exchange modes involving pairs of these anions, which include chloride-bicarbonate, chloride-oxalate, oxalate-formate, oxalate-sulfate and chloride-formate exchange. Apical membrane chloride-bicarbonate exchanger that mediates luminal chloride absorption and bicarbonate secretion by the small intestinal brush border membrane and contributes to intracellular pH regulation in the duodenal upper villous epithelium during proton-coupled peptide absorption, possibly by providing a bicarbonate import pathway. Its association with carbonic anhydrase CA2 forms a bicarbonate transport metabolon; hence maximizes the local concentration of bicarbonate at the transporter site. Also mediates intestinal chloride absorption and oxalate secretion, thereby preventing hyperoxaluria and calcium oxalate urolithiasis. Transepithelial oxalate secretion, chloride-formate, chloride-oxalate and chloride-bicarbonate transport activities in the duodenum are inhibited by PKC activation in a calcium-independent manner. The apical membrane chloride-bicarbonate exchanger also provides a major route for fluid and bicarbonate secretion into the proximal tubules of the kidney as well as into the proximal part of the interlobular pancreatic ductal tree, where it mediates electrogenic chloride-bicarbonate exchange with a chloride-bicarbonate stoichiometry of 1:2, and hence will dilute and alkalinize protein-rich acinar secretion. Also mediates the transcellular sulfate absorption and oxalate secretion across the apical membrane in the duodenum and the formate ion efflux at the apical brush border of cells in the proximal tubules of kidney. Plays a role in sperm capacitation by increasing intracellular pH. Its function is as follows. Mediates electrogenic chloride-bicarbonate exchange with a chloride-bicarbonate stoichiometry of 1:2. Also mediates exchange of chloride-formate and chloride-oxalate ions. Mediates transcellular sulfate absorption. This chain is Solute carrier family 26 member 6, found in Mus musculus (Mouse).